The chain runs to 161 residues: uncharacterized protein (161 aa).

The N-terminal stretch at 1–27 (MKKIGLLFMLCLAALFTIGFPAQQADA) is a signal peptide.

It is found in the secreted. This is an uncharacterized protein from Bacillus subtilis (strain 168).